Here is a 120-residue protein sequence, read N- to C-terminus: Large ribosomal subunit protein bL17 (120 aa).

The protein belongs to the bacterial ribosomal protein bL17 family. In terms of assembly, part of the 50S ribosomal subunit. Contacts protein L32.

This Shouchella clausii (strain KSM-K16) (Alkalihalobacillus clausii) protein is Large ribosomal subunit protein bL17.